A 571-amino-acid polypeptide reads, in one-letter code: Protein EARLY STARVATION 1, chloroplastic (571 aa).

Disordered regions lie at residues 142–162 and 215–254; these read RHSS…KDAG and GSYR…TEHD. The span at 145–155 shows a compositional bias: low complexity; sequence SCSSQSLPQQQ.

The protein belongs to the ESV1 family.

The protein resides in the plastid. It localises to the chloroplast stroma. Binds preferentially to highly ordered alpha-glucans, such as starch and crystalline maltodextrins. Involved in the organization of the starch granule matrix, thus influencing starch turnover by modulating the accessibility of starch polymers to modifying and degrading enzymes. Required for the control of starch degradation in leaves and starch distribution in nonphotosynthetic parts. Promotes gravitropic responses, negative in shoots but positive in roots, by facilitating starch granules (statoliths) formation in hypocotyls and roots columella. This Marchantia polymorpha (Common liverwort) protein is Protein EARLY STARVATION 1, chloroplastic.